A 568-amino-acid chain; its full sequence is AT-rich interactive domain-containing protein 3B (568 aa).

An N-acetylmethionine modification is found at methionine 1. Residues 1 to 22 (MEPLQQQQQQQQQKQPQQPLLQ) are compositionally biased toward low complexity. The disordered stretch occupies residues 1–174 (MEPLQQQQQQ…SVPTAGQPSW (174 aa)). Phosphoserine is present on serine 87. Positions 88–107 (EPEEEEGGLEDEDGDDDVAE) are enriched in acidic residues. Over residues 151–160 (TKEDHTKDAS) the composition is skewed to basic and acidic residues. The tract at residues 201-374 (SRDFAKLYEL…SSPKIRFSIL (174 aa)) is interaction with RB1. The region spanning 213 to 305 (DPERKEFLDD…YLYAYECEKK (93 aa)) is the ARID domain. Serine 309 carries the phosphoserine modification. Asymmetric dimethylarginine is present on arginine 370. Positions 378–403 (SSSGTSASSPRIPPASTLRKGDGVPV) are disordered. The REKLES domain maps to 425 to 522 (GPLEHLRERL…GVLFAQKPVV (98 aa)). Positions 495-518 (SNIGSINMSVDIDGTTYTGVLFAQ) are interaction with ARID3A. Positions 529-559 (TPQSIGSSASSSNSSSSHCSPSPTSSRGTPS) are enriched in low complexity. Residues 529–568 (TPQSIGSSASSSNSSSSHCSPSPTSSRGTPSAEPSTSWSL) form a disordered region.

As to quaternary structure, heterodimer with ARID3A. Interacts with unphosphorylated RB1. In terms of tissue distribution, expressed at high levels in testis. Also expressed in prostate, thyroid and thymus.

It localises to the nucleus. Its function is as follows. Transcription factor involved in the production of cranial mesenchymal tissues. Favors nuclear targeting of ARID3A. The protein is AT-rich interactive domain-containing protein 3B (Arid3b) of Mus musculus (Mouse).